A 358-amino-acid chain; its full sequence is MDKLVDNFLSGQSRTMSEDLLSASSPQLCYENLNGSCIRSPYSPGPRLILYAVFGFGAVLAVCGNLLVMTSILHFRQLHSPANFLVASLACADFLVGLTVMPFSTVRSVEGCWYFGDTYCKFHSCFEGSFCYSSIFHLCFISVDRYIAVSDPLIYPTRFTASVSGKCITFSWLLSIIYSFSLLYTGANEAGLEDLVSALTCVGGCQIAVNQSWVFINFLLFLVPTLVMMTVYSKIFLIAKQQAQNIEKMSKQTTRASESYKDRVAKRERKAAKTLGIAVAAFLLSWLPYFIDSIIDAFLGFITPTYVYEILVWIAYYNSAMNPLIYAFFYPWFRKAIKLIVTGKILRQNSSVTNLFPE.

Residues 1–47 (MDKLVDNFLSGQSRTMSEDLLSASSPQLCYENLNGSCIRSPYSPGPR) are Extracellular-facing. An N-linked (GlcNAc...) asparagine glycan is attached at asparagine 34. 2 disulfides stabilise this stretch: cysteine 37/cysteine 201 and cysteine 120/cysteine 205. Residues 48 to 68 (LILYAVFGFGAVLAVCGNLLV) traverse the membrane as a helical segment. The Cytoplasmic segment spans residues 69–83 (MTSILHFRQLHSPAN). The chain crosses the membrane as a helical span at residues 84 to 104 (FLVASLACADFLVGLTVMPFS). At 105 to 121 (TVRSVEGCWYFGDTYCK) the chain is on the extracellular side. The chain crosses the membrane as a helical span at residues 122–143 (FHSCFEGSFCYSSIFHLCFISV). Topologically, residues 144-166 (DRYIAVSDPLIYPTRFTASVSGK) are cytoplasmic. The chain crosses the membrane as a helical span at residues 167–187 (CITFSWLLSIIYSFSLLYTGA). Residues 188 to 212 (NEAGLEDLVSALTCVGGCQIAVNQS) are Extracellular-facing. An N-linked (GlcNAc...) asparagine glycan is attached at asparagine 210. Residues 213–233 (WVFINFLLFLVPTLVMMTVYS) traverse the membrane as a helical segment. Residues 234–274 (KIFLIAKQQAQNIEKMSKQTTRASESYKDRVAKRERKAAKT) are Cytoplasmic-facing. A helical transmembrane segment spans residues 275 to 295 (LGIAVAAFLLSWLPYFIDSII). Residues 296–309 (DAFLGFITPTYVYE) lie on the Extracellular side of the membrane. The helical transmembrane segment at 310–333 (ILVWIAYYNSAMNPLIYAFFYPWF) threads the bilayer. At 334–358 (RKAIKLIVTGKILRQNSSVTNLFPE) the chain is on the cytoplasmic side.

The protein belongs to the G-protein coupled receptor 1 family.

Its subcellular location is the cell membrane. Functionally, olfactory receptor specific for N,N-dimethylalkylamines trace amines. Trace amine compounds are enriched in animal body fluids and act on trace amine-associated receptors (TAARs) to elicit both intraspecific and interspecific innate behaviors. Ligand-binding causes a conformation change that triggers signaling via G(s)-class of G alpha proteins (GNAL or GNAS). The sequence is that of Trace amine-associated receptor 7a from Rattus norvegicus (Rat).